Here is a 394-residue protein sequence, read N- to C-terminus: MSQFGTTDIVSGSETPPYSGASYQDAQDDNTHPHSSDAGAEKFSAGSGSESHTESSRSDDEDSQAKTKMVDNITILKYILDSLSGRDKLAKIIKYALDILKLFIEKSKRNLTVLDPSVLTYYTKILKNLTVKVALRHPITVIKVLLLSLLRNFDKKIDFISQQLSTFRYILRFGGTPFRVCSFLGKFNKTRKCNFQIDQIKKIWFNEASLREFLDLYYGIFDELDLLYKLKIWTNKSFYSFVSRQESLAWQYDILLSLKDHWLNLQSLQKRQLELEVQLKVQNNALLLSPILMHQAHKDDGSQSPIRKQLLNDLNVNNDAEVLIHKQLKAIKDEKTLVYLDIARLSFDCMANTSDILNLKTPKGTYAVLSLGSGLTGLVKLWITTKRSLCSSKD.

A compositionally biased stretch (polar residues) spans 1–25 (MSQFGTTDIVSGSETPPYSGASYQD). The tract at residues 1–65 (MSQFGTTDIV…SRSDDEDSQA (65 aa)) is disordered. Topologically, residues 1-366 (MSQFGTTDIV…LNLKTPKGTY (366 aa)) are cytoplasmic. The span at 51 to 65 (SHTESSRSDDEDSQA) shows a compositional bias: basic and acidic residues. Residues Ser58, Ser63, and Ser289 each carry the phosphoserine modification. Residues 367 to 383 (AVLSLGSGLTGLVKLWI) traverse the membrane as a helical segment. Residues 384 to 394 (TTKRSLCSSKD) lie on the Lumenal side of the membrane.

In terms of assembly, homooligomer. Interacts with PEX27 and PEX34.

It is found in the peroxisome membrane. Its function is as follows. Required for regulation of peroxisome size and maintenance. Has a role in the import of peroxisomal matrix proteins. Imports RHO1 into the peroxisome. Also promotes peroxisome division and biogenesis. This Saccharomyces cerevisiae (strain ATCC 204508 / S288c) (Baker's yeast) protein is Peroxisomal membrane protein PEX25 (PEX25).